Consider the following 446-residue polypeptide: Bifunctional protein GlmU (446 aa).

The tract at residues 1-226 (MLAVAILAAG…PDEVNGINDR (226 aa)) is pyrophosphorylase. Residues 7-10 (LAAG), lysine 21, glutamine 73, and 78-79 (GT) contribute to the UDP-N-acetyl-alpha-D-glucosamine site. Aspartate 103 serves as a coordination point for Mg(2+). Positions 140, 155, 170, and 224 each coordinate UDP-N-acetyl-alpha-D-glucosamine. Mg(2+) is bound at residue asparagine 224. The tract at residues 227–247 (CQLANCEALLQERLRNYWMKE) is linker. The N-acetyltransferase stretch occupies residues 248–446 (GVTFTDPASC…SKQLIKNGWQ (199 aa)). Residues arginine 329 and lysine 347 each contribute to the UDP-N-acetyl-alpha-D-glucosamine site. The active-site Proton acceptor is the histidine 359. Residues tyrosine 362 and asparagine 373 each contribute to the UDP-N-acetyl-alpha-D-glucosamine site. Acetyl-CoA-binding positions include alanine 376, 382–383 (NY), alanine 419, and arginine 436.

This sequence in the N-terminal section; belongs to the N-acetylglucosamine-1-phosphate uridyltransferase family. The protein in the C-terminal section; belongs to the transferase hexapeptide repeat family. Homotrimer. Requires Mg(2+) as cofactor.

Its subcellular location is the cytoplasm. The enzyme catalyses alpha-D-glucosamine 1-phosphate + acetyl-CoA = N-acetyl-alpha-D-glucosamine 1-phosphate + CoA + H(+). It catalyses the reaction N-acetyl-alpha-D-glucosamine 1-phosphate + UTP + H(+) = UDP-N-acetyl-alpha-D-glucosamine + diphosphate. It functions in the pathway nucleotide-sugar biosynthesis; UDP-N-acetyl-alpha-D-glucosamine biosynthesis; N-acetyl-alpha-D-glucosamine 1-phosphate from alpha-D-glucosamine 6-phosphate (route II): step 2/2. It participates in nucleotide-sugar biosynthesis; UDP-N-acetyl-alpha-D-glucosamine biosynthesis; UDP-N-acetyl-alpha-D-glucosamine from N-acetyl-alpha-D-glucosamine 1-phosphate: step 1/1. Its pathway is bacterial outer membrane biogenesis; LPS lipid A biosynthesis. Functionally, catalyzes the last two sequential reactions in the de novo biosynthetic pathway for UDP-N-acetylglucosamine (UDP-GlcNAc). The C-terminal domain catalyzes the transfer of acetyl group from acetyl coenzyme A to glucosamine-1-phosphate (GlcN-1-P) to produce N-acetylglucosamine-1-phosphate (GlcNAc-1-P), which is converted into UDP-GlcNAc by the transfer of uridine 5-monophosphate (from uridine 5-triphosphate), a reaction catalyzed by the N-terminal domain. The sequence is that of Bifunctional protein GlmU from Prochlorococcus marinus (strain MIT 9313).